We begin with the raw amino-acid sequence, 492 residues long: MDPYKYRSSSAYNAPFWTTNSGAPVYNNNNSLTVGSRGPILLEDYHLVEKLANFDRERIPERVVHARGASAKGFFEVTHDITALTCADFLRAPGVQTPVIVRFSTVIHERGSPETLRDPRGFAVKFYTREGNFDLVGNNFPVFFIRDGMKFPDMVHSLKPNPKSHIQEDWRIMDFFSHHPESLHMFTFLLDDIGVPQDYRHMDGSGVNTYTLINKAGKAYYVKFHWKPTCGVKSLLEEEAIKIGGANHSHATQDLYDSIAAGNYPEWKLFIQTIDPDHEDRLDFDPLDVTKTWPEDIFPLQPVGRLVLNKNIDNFFAENEQLAFCPAIIVPGIYYSDDKLLQTRIFSYSDTQRHRLGPNYLQLPANAPKCAHHNNHYDGFMNFMHRDEEIDYFPSRYDPARHAEQYPIPPVRLSGKRDKCVIEKENNFKQPGERYRSFSPDRQERFINRVVGGLSDPRVTHEVRSIWVSYWSQADKSLGQKIASRLNVKPNY.

Catalysis depends on residues H65 and N138. Y348 contacts heme.

Belongs to the catalase family. In terms of assembly, homotetramer. Heme serves as cofactor.

The protein resides in the cytoplasm. The protein localises to the cytosol. Its subcellular location is the peroxisome matrix. It catalyses the reaction 2 H2O2 = O2 + 2 H2O. In terms of biological role, catalyzes the degradation of hydrogen peroxide (H(2)O(2)) generated by peroxisomal oxidases to water and oxygen, thereby protecting cells from the toxic effects of hydrogen peroxide. This is Catalase from Helianthus annuus (Common sunflower).